A 322-amino-acid polypeptide reads, in one-letter code: Delta-aminolevulinic acid dehydratase (322 aa).

Zn(2+)-binding residues include Cys120, Cys122, and Cys130. Catalysis depends on Lys195, which acts as the Schiff-base intermediate with substrate. Positions 205 and 217 each coordinate 5-aminolevulinate. Mg(2+) is bound at residue Glu233. The active-site Schiff-base intermediate with substrate is Lys248. The 5-aminolevulinate site is built by Ser274 and Tyr312.

This sequence belongs to the ALAD family. Homooctamer. Zn(2+) serves as cofactor.

The enzyme catalyses 2 5-aminolevulinate = porphobilinogen + 2 H2O + H(+). The protein operates within porphyrin-containing compound metabolism; protoporphyrin-IX biosynthesis; coproporphyrinogen-III from 5-aminolevulinate: step 1/4. Its function is as follows. Catalyzes an early step in the biosynthesis of tetrapyrroles. Binds two molecules of 5-aminolevulinate per subunit, each at a distinct site, and catalyzes their condensation to form porphobilinogen. The polypeptide is Delta-aminolevulinic acid dehydratase (hemB) (Archaeoglobus fulgidus (strain ATCC 49558 / DSM 4304 / JCM 9628 / NBRC 100126 / VC-16)).